The chain runs to 390 residues: Glutamyl-tRNA reductase (390 aa).

Substrate-binding positions include 46–49, Ser96, 101–103, and Gln107; these read TCNR and EAQ. Cys47 acts as the Nucleophile in catalysis. An NADP(+)-binding site is contributed by 176-181; it reads GAGEMA.

It belongs to the glutamyl-tRNA reductase family. As to quaternary structure, homodimer.

The catalysed reaction is (S)-4-amino-5-oxopentanoate + tRNA(Glu) + NADP(+) = L-glutamyl-tRNA(Glu) + NADPH + H(+). It functions in the pathway porphyrin-containing compound metabolism; protoporphyrin-IX biosynthesis; 5-aminolevulinate from L-glutamyl-tRNA(Glu): step 1/2. Its function is as follows. Catalyzes the NADPH-dependent reduction of glutamyl-tRNA(Glu) to glutamate 1-semialdehyde (GSA). The chain is Glutamyl-tRNA reductase from Thermus thermophilus (strain ATCC 27634 / DSM 579 / HB8).